We begin with the raw amino-acid sequence, 198 residues long: Ribonuclease HII (198 aa).

The 189-residue stretch at 10–198 (HLVAGVDEVG…PVKRALGLVS (189 aa)) folds into the RNase H type-2 domain. Residues Asp-16, Glu-17, and Asp-108 each contribute to the a divalent metal cation site.

This sequence belongs to the RNase HII family. Mn(2+) serves as cofactor. It depends on Mg(2+) as a cofactor.

Its subcellular location is the cytoplasm. It catalyses the reaction Endonucleolytic cleavage to 5'-phosphomonoester.. Its function is as follows. Endonuclease that specifically degrades the RNA of RNA-DNA hybrids. In Salmonella schwarzengrund (strain CVM19633), this protein is Ribonuclease HII.